Consider the following 258-residue polypeptide: Deoxyribose-phosphate aldolase (258 aa).

The active-site Proton donor/acceptor is aspartate 101. The active-site Schiff-base intermediate with acetaldehyde is lysine 166. Lysine 200 acts as the Proton donor/acceptor in catalysis.

The protein belongs to the DeoC/FbaB aldolase family. DeoC type 2 subfamily.

It is found in the cytoplasm. The catalysed reaction is 2-deoxy-D-ribose 5-phosphate = D-glyceraldehyde 3-phosphate + acetaldehyde. The protein operates within carbohydrate degradation; 2-deoxy-D-ribose 1-phosphate degradation; D-glyceraldehyde 3-phosphate and acetaldehyde from 2-deoxy-alpha-D-ribose 1-phosphate: step 2/2. Its function is as follows. Catalyzes a reversible aldol reaction between acetaldehyde and D-glyceraldehyde 3-phosphate to generate 2-deoxy-D-ribose 5-phosphate. The polypeptide is Deoxyribose-phosphate aldolase (Haemophilus ducreyi (strain 35000HP / ATCC 700724)).